A 505-amino-acid chain; its full sequence is Probable malate:quinone oxidoreductase (505 aa).

It belongs to the MQO family. The cofactor is FAD.

It catalyses the reaction (S)-malate + a quinone = a quinol + oxaloacetate. Its pathway is carbohydrate metabolism; tricarboxylic acid cycle; oxaloacetate from (S)-malate (quinone route): step 1/1. This chain is Probable malate:quinone oxidoreductase, found in Pseudomonas fluorescens.